The sequence spans 369 residues: Putative gustatory receptor 39b (369 aa).

Topologically, residues 1–32 (MLYSFHPYLKYFALLGLVPWSESCAQSKFVQK) are cytoplasmic. A helical transmembrane segment spans residues 33–53 (VYSAILIILNAVHFGISIYFP). At 54-59 (QSAELF) the chain is on the extracellular side. The helical transmembrane segment at 60-80 (LSLMVNVIVFVARIVCVTVII) threads the bilayer. At 81–122 (LQVMVHYDDYFRFCREMKYLGLRLQCELKIHVGRLKWQSYAK) the chain is on the cytoplasmic side. Residues 123–143 (ILALGIGFLVTVLPSIYVALS) traverse the membrane as a helical segment. Topologically, residues 144-147 (GSLL) are extracellular. A helical transmembrane segment spans residues 148–168 (YFWSSLLSILIIRMQFVLVLL). Residues 169 to 224 (NVELLGHHVSLLGIRLQNVLECHLMGANCTLDGNANRLCSLEFLLALKQSHMQLHY) are Cytoplasmic-facing. The chain crosses the membrane as a helical span at residues 225–245 (LFTHFNDLFGWSILGTYVVLF). The Extracellular portion of the chain corresponds to 246 to 265 (SDSTVNIYWTQQVLVEVYEY). Residues 266–286 (KYLYATFSVFVPSFFNILVFC) form a helical membrane-spanning segment. The Cytoplasmic segment spans residues 287-348 (RCGEFCQRQS…EGFMSTDNSL (62 aa)). Residues 349–368 (LMSILAAKVTYLIVLMQFSS) traverse the membrane as a helical segment. Position 369 (Val369) is a topological domain, extracellular.

Belongs to the insect chemoreceptor superfamily. Gustatory receptor (GR) family. Gr2a subfamily. As to expression, expressed in the adult labellar chemosensory neurons and in abdominal ganglions. In larvae, is expressed in neurons of the dorsal and posterior pharyngeal sense organs.

The protein resides in the cell membrane. Functionally, probable gustatory receptor which mediates acceptance or avoidance behavior, depending on its substrates. Has also atypical sensory function in organ not limited to conventional taste sensing like abdominal ganglions. This is Putative gustatory receptor 39b (Gr39b) from Drosophila melanogaster (Fruit fly).